The chain runs to 157 residues: Peptide methionine sulfoxide reductase MsrB (157 aa).

In terms of domain architecture, MsrB spans 14–137 (DNDLRERLTP…NSAALRFVPL (124 aa)). Residue C126 is the Nucleophile of the active site.

This sequence belongs to the MsrB Met sulfoxide reductase family.

The enzyme catalyses L-methionyl-[protein] + [thioredoxin]-disulfide + H2O = L-methionyl-(R)-S-oxide-[protein] + [thioredoxin]-dithiol. This chain is Peptide methionine sulfoxide reductase MsrB, found in Deinococcus radiodurans (strain ATCC 13939 / DSM 20539 / JCM 16871 / CCUG 27074 / LMG 4051 / NBRC 15346 / NCIMB 9279 / VKM B-1422 / R1).